The following is a 193-amino-acid chain: Probable thymidylate kinase (193 aa).

7–14 (GIDGAGKT) serves as a coordination point for ATP.

It belongs to the thymidylate kinase family.

It carries out the reaction dTMP + ATP = dTDP + ADP. The protein is Probable thymidylate kinase (tmk) of Thermoplasma acidophilum (strain ATCC 25905 / DSM 1728 / JCM 9062 / NBRC 15155 / AMRC-C165).